Here is a 1233-residue protein sequence, read N- to C-terminus: Rho guanine nucleotide exchange factor 10-like protein (1233 aa).

The span at 1–10 shows a compositional bias: pro residues; that stretch reads MASSNPPPQP. Residues 1 to 93 form a disordered region; the sequence is MASSNPPPQP…GTGVPAWVSN (93 aa). Residues 26–46 are compositionally biased toward acidic residues; it reads EAEDDPGEAFEFDDSDDEEDT. Residue Ser-40 is modified to Phosphoserine. The span at 72–89 shows a compositional bias: low complexity; sequence PVTDPDPAAAPPGTGVPA. Phosphotyrosine is present on residues Tyr-131 and Tyr-152. The segment at 159 to 193 is disordered; sequence GAPRQAEDLGWSSSEFESYSEDSGEEAKPEVEPAK. Over residues 183–193 the composition is skewed to basic and acidic residues; the sequence is EEAKPEVEPAK. Ser-240 bears the Phosphoserine mark. Positions 275–462 constitute a DH domain; that stretch reads VRRHILGSIV…ETLAEKLNEQ (188 aa). Positions 1089-1104 are enriched in basic and acidic residues; the sequence is QEEAEGPRAEEEKPDG. Disordered regions lie at residues 1089-1117 and 1140-1161; these read QEEA…HVGR and PLLS…SEED.

In terms of assembly, interacts with RHOA, RHOB and RHOC.

It is found in the cytoplasm. In terms of biological role, acts as a guanine nucleotide exchange factor (GEF) for RHOA, RHOB and RHOC. In Pongo abelii (Sumatran orangutan), this protein is Rho guanine nucleotide exchange factor 10-like protein (ARHGEF10L).